The sequence spans 373 residues: NAD(P)H-quinone oxidoreductase subunit 1 (373 aa).

8 helical membrane-spanning segments follow: residues 28 to 48 (LLWL…GVLV), 98 to 118 (LLFT…WLII), 129 to 149 (VGVG…GLLM), 167 to 187 (AAQS…IVMM), 205 to 225 (ILSW…ICAL), 267 to 287 (VLSA…PIPV), 309 to 329 (SVGI…AILL), and 348 to 368 (FLLP…LAFP).

It belongs to the complex I subunit 1 family. As to quaternary structure, NDH-1 is composed of at least 11 different subunits.

The protein localises to the cellular thylakoid membrane. It carries out the reaction a plastoquinone + NADH + (n+1) H(+)(in) = a plastoquinol + NAD(+) + n H(+)(out). It catalyses the reaction a plastoquinone + NADPH + (n+1) H(+)(in) = a plastoquinol + NADP(+) + n H(+)(out). Functionally, NDH-1 shuttles electrons from an unknown electron donor, via FMN and iron-sulfur (Fe-S) centers, to quinones in the respiratory and/or the photosynthetic chain. The immediate electron acceptor for the enzyme in this species is believed to be plastoquinone. Couples the redox reaction to proton translocation, and thus conserves the redox energy in a proton gradient. The sequence is that of NAD(P)H-quinone oxidoreductase subunit 1 from Parasynechococcus marenigrum (strain WH8102).